Consider the following 500-residue polypeptide: Raftlin-2 (500 aa).

Residue G2 is the site of N-myristoyl glycine attachment. A lipid anchor (S-palmitoyl cysteine) is attached at C3. The interval 203-236 (GHLSESGVEEEPQHESGQHQTERNSSPSYANPKR) is disordered. Basic and acidic residues predominate over residues 213-224 (EPQHESGQHQTE). A Phosphoserine modification is found at S404. Residues 406 to 500 (AQTPERKGSR…EEGVTQVTCM (95 aa)) are disordered. At T408 the chain carries Phosphothreonine. Basic and acidic residues predominate over residues 409–424 (PERKGSRLLKGEDRNK). Residues 426-438 (SSRSLGLDTNASQ) are compositionally biased toward polar residues. At S429 the chain carries Phosphoserine. Low complexity predominate over residues 467–478 (SDSFSGFSSSDS).

This sequence belongs to the raftlin family. Expressed in B-cells, heart, brain, spleen, large intestine and lung. Expressed in dendritic cells and macrophages.

Its subcellular location is the cell membrane. In terms of biological role, upon bacterial lipopolysaccharide stimulation, mediates clathrin-dependent internalization of TLR4 in dendritic cells, resulting in activation of TICAM1-mediated signaling and subsequent IFNB1 production. May regulate B-cell antigen receptor-mediated signaling. This is Raftlin-2 (Rftn2) from Mus musculus (Mouse).